Here is a 203-residue protein sequence, read N- to C-terminus: Outer-membrane lipoprotein LolB (203 aa).

A signal peptide spans 1-20; the sequence is MNRSRRLALLCLGVPLLLQA. The N-palmitoyl cysteine moiety is linked to residue C21. C21 carries S-diacylglycerol cysteine lipidation.

The protein belongs to the LolB family. As to quaternary structure, monomer.

It is found in the cell outer membrane. Plays a critical role in the incorporation of lipoproteins in the outer membrane after they are released by the LolA protein. The polypeptide is Outer-membrane lipoprotein LolB (Cupriavidus taiwanensis (strain DSM 17343 / BCRC 17206 / CCUG 44338 / CIP 107171 / LMG 19424 / R1) (Ralstonia taiwanensis (strain LMG 19424))).